The sequence spans 180 residues: uncharacterized protein (180 aa).

A signal peptide spans 1–22 (MKRSIIAAAVFSSFFMSAGVFA).

Belongs to the fimbrial protein family.

Functionally, part of the yehABCD fimbrial operon. Could contribute to adhesion to various surfaces in specific environmental niches. This is an uncharacterized protein from Escherichia coli (strain K12).